Reading from the N-terminus, the 413-residue chain is Heparan-sulfate 6-O-sulfotransferase 1-A (413 aa).

At Met-9 to Lys-15 the chain is on the cytoplasmic side. A helical; Signal-anchor for type II membrane protein transmembrane segment spans residues Phe-16–Pro-36. At Gly-37 to Trp-413 the chain is on the lumenal side. A 3'-phosphoadenylyl sulfate-binding site is contributed by His-92 to Thr-100. Residues Lys-122–Lys-123, Arg-139, Trp-144, and His-149 each bind substrate. Residue His-149 is the Proton acceptor of the active site. 3'-phosphoadenylyl sulfate contacts are provided by Arg-183 and Ser-191. Residues His-195 and Trp-202 each contribute to the substrate site. The N-linked (GlcNAc...) asparagine glycan is linked to Asn-262. A 3'-phosphoadenylyl sulfate-binding site is contributed by Met-315–Tyr-317. Asn-318 carries an N-linked (GlcNAc...) asparagine glycan. A 3'-phosphoadenylyl sulfate-binding site is contributed by Arg-321 to Ala-322. N-linked (GlcNAc...) asparagine glycosylation is present at Asn-329. Positions Pro-374–Pro-401 are disordered.

It belongs to the sulfotransferase 6 family. In terms of tissue distribution, during somitogenesis, first expressed in polster and presumptive forebrain. During mid-somitogenesis, expressed in eye, hindbrain and anterior spinal cord. During late somitogenesis, strong expression in eye and hindbrain, decreased levels in midbrain and anterior spinal cord. At 24 hours post-fertilization (hpf), expressed in neural retina and lens, brain and anterior spinal cord. At 36 hpf, retinal expression is confined to the ciliary marginal zone and there is strong expression in tectum, rhombomeres and otic vesicle. At 48 hpf, expressed in retinal ganglion cells and in tectum, rhombomeres and pectoral fin. Not detected in the vasculature during embryogenesis.

The protein resides in the membrane. The enzyme catalyses alpha-D-glucosaminyl-[heparan sulfate](n) + 3'-phosphoadenylyl sulfate = 6-sulfo-alpha-D-glucosaminyl-[heparan sulfate](n) + adenosine 3',5'-bisphosphate + H(+). Functionally, 6-O-sulfation enzyme which catalyzes the transfer of sulfate from 3'-phosphoadenosine 5'-phosphosulfate (PAPS) to position 6 of the N-sulfoglucosamine residue (GlcNS) of heparan sulfate. The sequence is that of Heparan-sulfate 6-O-sulfotransferase 1-A from Danio rerio (Zebrafish).